We begin with the raw amino-acid sequence, 180 residues long: Acireductone dioxygenase (180 aa).

Fe(2+) contacts are provided by histidine 99, histidine 101, glutamate 105, and histidine 145. Ni(2+) is bound by residues histidine 99, histidine 101, glutamate 105, and histidine 145.

The protein belongs to the acireductone dioxygenase (ARD) family. Monomer. The cofactor is Fe(2+). Ni(2+) is required as a cofactor.

It carries out the reaction 1,2-dihydroxy-5-(methylsulfanyl)pent-1-en-3-one + O2 = 3-(methylsulfanyl)propanoate + CO + formate + 2 H(+). The enzyme catalyses 1,2-dihydroxy-5-(methylsulfanyl)pent-1-en-3-one + O2 = 4-methylsulfanyl-2-oxobutanoate + formate + 2 H(+). Its pathway is amino-acid biosynthesis; L-methionine biosynthesis via salvage pathway; L-methionine from S-methyl-5-thio-alpha-D-ribose 1-phosphate: step 5/6. In terms of biological role, catalyzes 2 different reactions between oxygen and the acireductone 1,2-dihydroxy-3-keto-5-methylthiopentene (DHK-MTPene) depending upon the metal bound in the active site. Fe-containing acireductone dioxygenase (Fe-ARD) produces formate and 2-keto-4-methylthiobutyrate (KMTB), the alpha-ketoacid precursor of methionine in the methionine recycle pathway. Ni-containing acireductone dioxygenase (Ni-ARD) produces methylthiopropionate, carbon monoxide and formate, and does not lie on the methionine recycle pathway. The polypeptide is Acireductone dioxygenase (Geobacillus thermodenitrificans (strain NG80-2)).